Consider the following 197-residue polypeptide: Transcription factor FapR (197 aa).

This sequence belongs to the FapR family.

In terms of biological role, transcriptional factor involved in regulation of membrane lipid biosynthesis by repressing genes involved in fatty acid and phospholipid metabolism. This is Transcription factor FapR from Bacillus anthracis (strain A0248).